We begin with the raw amino-acid sequence, 389 residues long: Maintenance of mitochondrial morphology protein 1-1 (389 aa).

Over 1 to 22 (MSQFVLPAVASEGIINWPFLTG) the chain is Lumenal. Residues 23–43 (FMLGQFSVGLVLLIFVRFFIF) traverse the membrane as a helical segment. The Cytoplasmic segment spans residues 44-389 (SDQTEPDINT…YRSLQTSPRR (346 aa)). The SMP-LTD domain occupies 83–278 (QPESLDWFSV…YPEYQQFELP (196 aa)). 2 disordered regions span residues 283-345 (KTSA…PKFI) and 360-389 (FYEM…SPRR). Positions 330–341 (MSMSSQRPNINN) are enriched in polar residues.

It belongs to the MMM1 family. In terms of assembly, homodimer. Component of the ER-mitochondria encounter structure (ERMES) or MDM complex, composed of MMM1, MDM10, MDM12 and MDM34. An MMM1 homodimer associates with one molecule of MDM12 on each side in a pairwise head-to-tail manner, and the SMP-LTD domains of MMM1 and MDM12 generate a continuous hydrophobic tunnel for phospholipid trafficking.

It localises to the endoplasmic reticulum membrane. Functionally, component of the ERMES/MDM complex, which serves as a molecular tether to connect the endoplasmic reticulum (ER) and mitochondria. Components of this complex are involved in the control of mitochondrial shape and protein biogenesis, and function in nonvesicular lipid trafficking between the ER and mitochondria. The MDM12-MMM11 subcomplex functions in the major beta-barrel assembly pathway that is responsible for biogenesis of all outer membrane beta-barrel proteins, and acts in a late step after the SAM complex. The MDM10-MDM12-MMM1 subcomplex further acts in the TOM40-specific pathway after the action of the MDM12-MMM1 complex. Essential for establishing and maintaining the structure of mitochondria and maintenance of mtDNA nucleoids. This Yarrowia lipolytica (strain CLIB 122 / E 150) (Yeast) protein is Maintenance of mitochondrial morphology protein 1-1.